The chain runs to 56 residues: Ovomucoid (56 aa).

Residues Val6–Cys56 enclose the Kazal-like domain. Cystine bridges form between Cys8/Cys38, Cys16/Cys35, and Cys24/Cys56. Asn45 carries an N-linked (GlcNAc...) asparagine glycan.

The protein resides in the secreted. This chain is Ovomucoid, found in Ortalis vetula (Plain chachalaca).